The primary structure comprises 135 residues: T-cell receptor beta chain V region 3H.25 (135 aa).

Residues 1–20 form the signal peptide; the sequence is MATRLLCYTVLCLLGARILN. Residues 21 to 115 form a v segment region; it reads SKVIQTPRYL…SALYLCASSL (95 aa). A disulfide bridge connects residues Cys-42 and Cys-111. Positions 116–118 are d segment; sequence FGT. The j segment stretch occupies residues 119–135; sequence SDYTFGSGTRLLVIGKA.

The sequence is that of T-cell receptor beta chain V region 3H.25 from Mus musculus (Mouse).